The sequence spans 162 residues: UPF0114 protein PA4574 (162 aa).

Transmembrane regions (helical) follow at residues 10 to 32, 53 to 75, and 136 to 156; these read YASR…ALTI, LILV…MVMI, and LMWY…MGYL.

The protein belongs to the UPF0114 family.

The protein localises to the cell membrane. This is UPF0114 protein PA4574 from Pseudomonas aeruginosa (strain ATCC 15692 / DSM 22644 / CIP 104116 / JCM 14847 / LMG 12228 / 1C / PRS 101 / PAO1).